The chain runs to 455 residues: Epoxide hydrolase 1 (455 aa).

Residues 1–21 traverse the membrane as a helical; Signal-anchor for type III membrane protein segment; the sequence is MLLELLLASVLGFVIYWFVSG. Residues 22 to 455 are Cytoplasmic-facing; that stretch reads DKEESLPLED…CKFVGLVERQ (434 aa). Residue D226 is the Nucleophile of the active site. A Dimethylated arginine modification is found at R295. Catalysis depends on Y374, which acts as the Proton donor. H431 serves as the catalytic Proton acceptor.

It belongs to the peptidase S33 family.

Its subcellular location is the microsome membrane. It localises to the endoplasmic reticulum membrane. The enzyme catalyses cis-stilbene oxide + H2O = (1R,2R)-hydrobenzoin. It carries out the reaction 1-(4-methoxyphenyl)-N-methyl-N-[(3-methyloxetan-3-yl)methyl]methanamine + H2O = 2-{[(4-methoxybenzyl)(methyl)amino]methyl}-2-methylpropane-1,3-diol. The catalysed reaction is 8,9-epoxy-(5Z,11Z,14Z)-eicosatrienoate + H2O = 8,9-dihydroxy-(5Z,11Z,14Z)-eicosatrienoate. It catalyses the reaction 11,12-epoxy-(5Z,8Z,14Z)-eicosatrienoate + H2O = 11,12-dihydroxy-(5Z,8Z,14Z)-eicosatrienoate. The enzyme catalyses 2-(5Z,8Z,11Z,14Z-eicosatetraenoyl)-glycerol + H2O = glycerol + (5Z,8Z,11Z,14Z)-eicosatetraenoate + H(+). With respect to regulation, inhibited by 10-hydroxystearamide and methoxy-arachidonyl fluorophosphate. In terms of biological role, biotransformation enzyme that catalyzes the hydrolysis of arene and aliphatic epoxides to less reactive and more water soluble dihydrodiols by the trans addition of water. May play a role in the metabolism of endogenous lipids such as epoxide-containing fatty acids. Metabolizes the abundant endocannabinoid 2-arachidonoylglycerol (2-AG) to free arachidonic acid (AA) and glycerol. Binds 20(S)-hydroxycholesterol (20(S)-OHC). In Oryctolagus cuniculus (Rabbit), this protein is Epoxide hydrolase 1 (EPHX1).